The sequence spans 711 residues: Ribosomal RNA large subunit methyltransferase K/L (711 aa).

A THUMP domain is found at 42–153; that stretch reads DAQRAVLWSR…KGRATISVDL (112 aa).

This sequence belongs to the methyltransferase superfamily. RlmKL family.

It localises to the cytoplasm. It carries out the reaction guanosine(2445) in 23S rRNA + S-adenosyl-L-methionine = N(2)-methylguanosine(2445) in 23S rRNA + S-adenosyl-L-homocysteine + H(+). The enzyme catalyses guanosine(2069) in 23S rRNA + S-adenosyl-L-methionine = N(2)-methylguanosine(2069) in 23S rRNA + S-adenosyl-L-homocysteine + H(+). Its function is as follows. Specifically methylates the guanine in position 2445 (m2G2445) and the guanine in position 2069 (m7G2069) of 23S rRNA. This Xanthomonas oryzae pv. oryzae (strain MAFF 311018) protein is Ribosomal RNA large subunit methyltransferase K/L.